The primary structure comprises 421 residues: Putative nickel insertion protein (421 aa).

This sequence belongs to the LarC family.

This is Putative nickel insertion protein from Gloeobacter violaceus (strain ATCC 29082 / PCC 7421).